The sequence spans 500 residues: Glutamate decarboxylase 3 (500 aa).

Ser8 is subject to Phosphoserine. The residue at position 277 (Lys277) is an N6-(pyridoxal phosphate)lysine.

The protein belongs to the group II decarboxylase family. Homohexamer. Interacts with calmodulin. The cofactor is pyridoxal 5'-phosphate. Expressed at low levels in siliques.

It carries out the reaction L-glutamate + H(+) = 4-aminobutanoate + CO2. Its function is as follows. Catalyzes the production of GABA. The calmodulin-binding is calcium-dependent and it is proposed that this may, directly or indirectly, form a calcium regulated control of GABA biosynthesis. This is Glutamate decarboxylase 3 (GAD3) from Arabidopsis thaliana (Mouse-ear cress).